Reading from the N-terminus, the 98-residue chain is NADH-ubiquinone oxidoreductase chain 4L (98 aa).

Helical transmembrane passes span 1-21 (MSLTYMNMLLAFMISLMGLLM), 29-49 (SLLCLEGMMLSLFVMMTVTIL), and 61-81 (IILLVFAACEAALGLSLLVMV).

It belongs to the complex I subunit 4L family. Core subunit of respiratory chain NADH dehydrogenase (Complex I) which is composed of 45 different subunits.

It is found in the mitochondrion inner membrane. The enzyme catalyses a ubiquinone + NADH + 5 H(+)(in) = a ubiquinol + NAD(+) + 4 H(+)(out). Its function is as follows. Core subunit of the mitochondrial membrane respiratory chain NADH dehydrogenase (Complex I) which catalyzes electron transfer from NADH through the respiratory chain, using ubiquinone as an electron acceptor. Part of the enzyme membrane arm which is embedded in the lipid bilayer and involved in proton translocation. The sequence is that of NADH-ubiquinone oxidoreductase chain 4L (MT-ND4L) from Sturnira lilium (Lesser yellow-shouldered bat).